A 173-amino-acid chain; its full sequence is NADH-ubiquinone oxidoreductase chain 6 (173 aa).

5 consecutive transmembrane segments (helical) span residues 1–21 (MTYF…AVAS), 27–47 (YGVL…LSLG), 48–68 (VSFI…VVFV), 87–107 (VVIY…VGDF), and 139–159 (WGAG…FVVL).

It belongs to the complex I subunit 6 family.

The protein resides in the mitochondrion membrane. It carries out the reaction a ubiquinone + NADH + 5 H(+)(in) = a ubiquinol + NAD(+) + 4 H(+)(out). In terms of biological role, core subunit of the mitochondrial membrane respiratory chain NADH dehydrogenase (Complex I) that is believed to belong to the minimal assembly required for catalysis. Complex I functions in the transfer of electrons from NADH to the respiratory chain. The immediate electron acceptor for the enzyme is believed to be ubiquinone. The chain is NADH-ubiquinone oxidoreductase chain 6 (MT-ND6) from Struthio camelus (Common ostrich).